A 403-amino-acid chain; its full sequence is MTVQVQDHDITTAADTAKLPQPMQPPLKQATYKTHTTDFIVNELLPLEFTGEGEHLWLHIQKSGMNTAYLAKLLSEWAEIPLRDVGFSGLKDRHALTTQWFSLRIPKKQLPDSEFAPVDISANESVTILEQQWHNKKLNRGTHRANQFIITLRDIEFASFEASLSLQISASEQPMSAKQAVEQHLTTISQSGVPNYFGPQRFGRSGNNIREALSLFARPVPESRPQPNKGKRKRVPREQNSMELSAARSLIFNEILAARVRDGSWNTGLAGEVFNLDGSGSIFASDEIDHTLRARLETGDIHPTAVLWGTSNEKVSGKAAAMETDIVAQSPLLMQLAVGLEQRDIKAQRRALRLPIEALSWEWEDKEDGQILVLNFTLTTGSFATSVLASLVQELITSSYSRS.

A compositionally biased stretch (basic and acidic residues) spans 1–10 (MTVQVQDHDI). Residues 1–24 (MTVQVQDHDITTAADTAKLPQPMQ) are disordered. The active-site Nucleophile is D92. The TRUD domain occupies 192 to 354 (GVPNYFGPQR…IKAQRRALRL (163 aa)). A disordered region spans residues 217–240 (ARPVPESRPQPNKGKRKRVPREQN).

This sequence belongs to the pseudouridine synthase TruD family.

It carries out the reaction uridine(13) in tRNA = pseudouridine(13) in tRNA. Its function is as follows. Responsible for synthesis of pseudouridine from uracil-13 in transfer RNAs. This Psychrobacter arcticus (strain DSM 17307 / VKM B-2377 / 273-4) protein is tRNA pseudouridine synthase D.